Here is a 311-residue protein sequence, read N- to C-terminus: Ribonuclease Z (311 aa).

The Zn(2+) site is built by histidine 61, histidine 63, aspartate 65, histidine 66, histidine 148, aspartate 216, and histidine 275. Aspartate 65 serves as the catalytic Proton acceptor.

The protein belongs to the RNase Z family. In terms of assembly, homodimer. Requires Zn(2+) as cofactor.

It catalyses the reaction Endonucleolytic cleavage of RNA, removing extra 3' nucleotides from tRNA precursor, generating 3' termini of tRNAs. A 3'-hydroxy group is left at the tRNA terminus and a 5'-phosphoryl group is left at the trailer molecule.. Zinc phosphodiesterase, which displays some tRNA 3'-processing endonuclease activity. Probably involved in tRNA maturation, by removing a 3'-trailer from precursor tRNA. This Clostridium novyi (strain NT) protein is Ribonuclease Z.